Consider the following 265-residue polypeptide: Mlc titration factor A (265 aa).

Zn(2+) is bound by residues H111, H148, H152, and E211.

Belongs to the MtfA family. In terms of assembly, interacts with Mlc. Zn(2+) serves as cofactor.

Its subcellular location is the cytoplasm. Its function is as follows. Involved in the modulation of the activity of the glucose-phosphotransferase system (glucose-PTS). Interacts with the transcriptional repressor Mlc, preventing its interaction with DNA and leading to the modulation of expression of genes regulated by Mlc, including ptsG, which encodes the PTS system glucose-specific EIICB component. In terms of biological role, shows zinc-dependent metallopeptidase activity. This Escherichia coli (strain 55989 / EAEC) protein is Mlc titration factor A.